Consider the following 204-residue polypeptide: Putative AgrB-like protein (204 aa).

4 consecutive transmembrane segments (helical) span residues 52-74, 87-107, 111-131, and 156-176; these read YGIA…YLWL, LNCT…FQNI, NWIV…FAPA, and LILT…LIMV.

Belongs to the AgrB family.

It is found in the cell membrane. May be involved in the proteolytic processing of a quorum sensing system signal molecule precursor. This chain is Putative AgrB-like protein, found in Listeria monocytogenes serotype 4b (strain CLIP80459).